Consider the following 598-residue polypeptide: Nuclear receptor subfamily 4immunitygroup A member 1 (598 aa).

Disordered stretches follow at residues Met-1–Pro-44, Tyr-131–Phe-158, Leu-177–Pro-206, and Gly-221–Gly-265. Over residues Ser-134–Ser-145 the composition is skewed to low complexity. The required for nuclear import stretch occupies residues Arg-171 to Ser-466. A DNA-binding region (nuclear receptor) is located at residues Glu-264 to Thr-339. 2 NR C4-type zinc fingers span residues Cys-267–Cys-287 and Cys-303–Cys-327. The segment at Ala-268–Lys-354 is required for binding NBRE-containing DNA. Positions Ala-299 to Pro-361 are required for the interaction with RXRA. Position 341 is a phosphoserine; by PKA (Ser-341). The tract at residues Ser-341–Pro-361 is disordered. Ser-351 carries the phosphoserine modification. The NR LBD domain occupies Ser-360–Thr-595. The tract at residues Pro-521–Gly-544 is binds lipopolysaccharide. The AF-2 stretch occupies residues Pro-584–Thr-595.

This sequence belongs to the nuclear hormone receptor family. NR4 subfamily. In terms of assembly, binds the NGFI-B response element (NBRE) as a monomer. Binds the Nur response element (NurRE), consisting of two inverse NBRE-related octanucleotide repeats separated by 6 base-pairs, as a dimer. Interacts (via N-terminus) with NLRP3 (via LRR repeat domain); the interaction is direct, requires binding of NR4A1/Nur77 to NBRE-containing dsDNA and lipopolysaccharide, and leads to non-canonical NLRP3 inflammasome activation. Interacts with GADD45GIP1. Interacts with STK11. Interacts with IFI27. Heterodimer (via DNA-binding domain) with RXRA (via C-terminus); DNA-binding of the heterodimer is enhanced by 9-cis retinoic acid. Competes for the RXRA interaction with EP300 and thereby attenuates EP300 mediated acetylation of RXRA. Interacts with NCOA1. Interacts with NCOA2. Interacts with NCOA3. Zn(2+) serves as cofactor. In terms of processing, phosphorylated at Ser-351 by RPS6KA1 and RPS6KA3 in response to mitogenic or stress stimuli. Acetylated by p300/CBP, acetylation increases stability. Deacetylated by HDAC1. In terms of tissue distribution, fetal muscle and adult liver, brain and thyroid.

The protein resides in the nucleus. Its subcellular location is the cytoplasm. It localises to the cytosol. It is found in the mitochondrion. Its transcription factor activity is activated by binding cytosporone B (Csn-B) via its ligand-binding (NR LBD) domain and stimulates recruitment of coactivators NCOA1 and NCOA2, but not NCOA3, to promoters. Csn-B-binding is also accompanied by its translocation to the mitochondrion. Its transcription factor activity is activated by corticotropin-releasing hormone (CRH) and forskolin. Not activated by binding cytosporone C (Csn-C). Functionally, orphan nuclear receptor. Binds the NGFI-B response element (NBRE) 5'-AAAGGTCA-3'. Binds 9-cis-retinoic acid outside of its ligand-binding (NR LBD) domain. Participates in energy homeostasis by sequestrating the kinase STK11 in the nucleus, thereby attenuating cytoplasmic AMPK activation. Regulates the inflammatory response in macrophages by regulating metabolic adaptations during inflammation, including repressing the transcription of genes involved in the citric acid cycle (TCA). Inhibits NF-kappa-B signaling by binding to low-affinity NF-kappa-B binding sites, such as at the IL2 promoter. May act concomitantly with NR4A2 in regulating the expression of delayed-early genes during liver regeneration. Plays a role in the vascular response to injury. In the cytosol, upon its detection of both bacterial lipopolysaccharide (LPS) and NBRE-containing mitochondrial DNA released by GSDMD pores during pyroptosis, it promotes non-canonical NLRP3 inflammasome activation by stimulating association of NLRP3 and NEK7. The sequence is that of Nuclear receptor subfamily 4immunitygroup A member 1 (NR4A1) from Homo sapiens (Human).